The sequence spans 85 residues: Beta-insect depressant toxin Lqh-dprIT3h (85 aa).

The first 21 residues, 1–21 (MKLLLLLTISASMLIEGLVNA), serve as a signal peptide directing secretion. One can recognise an LCN-type CS-alpha/beta domain in the interval 22–82 (DGYIRGGDGC…EWDYETDTCG (61 aa)). Disulfide bonds link cysteine 31-cysteine 81, cysteine 35-cysteine 56, cysteine 42-cysteine 63, and cysteine 46-cysteine 65. Glycine 82 is modified (glycine amide).

This sequence belongs to the long (4 C-C) scorpion toxin superfamily. Sodium channel inhibitor family. Beta subfamily. Expressed by the venom gland.

The protein resides in the secreted. Its function is as follows. Depressant insect beta-toxins cause a transient contraction paralysis followed by a slow flaccid paralysis. They bind voltage-independently at site-4 of sodium channels (Nav) and block action potentials, primarily by depolarizing the axonal membrane and suppressing the sodium current. This depressant toxin is active only on insects. It is found in a relatively small amount in the venom. This is Beta-insect depressant toxin Lqh-dprIT3h from Leiurus hebraeus (Hebrew deathstalker scorpion).